Consider the following 216-residue polypeptide: DNA replication complex GINS protein psf1 (216 aa).

The tract at residues 110–133 (QTTGGPKGVTEGNEGGGTTSSLSP) is disordered. The span at 111-127 (TTGGPKGVTEGNEGGGT) shows a compositional bias: gly residues.

This sequence belongs to the GINS1/PSF1 family. As to quaternary structure, component of the GINS complex which is a heterotetramer of div-26/sld5, drc-1/psf1, drc-2/psf2 and drc-3/psf3.

It localises to the nucleus. Functionally, the GINS complex plays an essential role in the initiation of DNA replication. This Neurospora crassa (strain ATCC 24698 / 74-OR23-1A / CBS 708.71 / DSM 1257 / FGSC 987) protein is DNA replication complex GINS protein psf1 (drc-1).